The primary structure comprises 887 residues: Endoglucanase 1 (887 aa).

The signal sequence occupies residues 1–55 (MRLVNSLGRRKILLILAVIVAFSTVLLFAKLWGRKTSSTLDEVGSKTHGDLTAEN). The disordered stretch occupies residues 40-66 (LDEVGSKTHGDLTAENKNGGYLPEEEI). Residues 43-53 (VGSKTHGDLTA) show a composition bias toward basic and acidic residues. The segment at 56–518 (KNGGYLPEEE…AKMYKLYGGS (463 aa)) is catalytic. Aspartate 131 functions as the Nucleophile in the catalytic mechanism. The segment at 441–460 (ENPPKRPHHRTAHGSWADSQ) is disordered. Catalysis depends on residues histidine 448, aspartate 486, and glutamate 495. Residues 529–684 (VPEDEIFVEA…GVLVFGREPG (156 aa)) form the CBM3 1 domain. The disordered stretch occupies residues 684 to 730 (GSASKSTSKDNGLSKATPTVKTESQPTAKHTQNPASDFKTPANQNSV). Over residues 686–729 (ASKSTSKDNGLSKATPTVKTESQPTAKHTQNPASDFKTPANQNS) the composition is skewed to polar residues. A CBM3 2 domain is found at 736-887 (IKGEVVLQYA…SNKLVYGKEP (152 aa)).

Belongs to the glycosyl hydrolase 9 (cellulase E) family.

The enzyme catalyses Endohydrolysis of (1-&gt;4)-beta-D-glucosidic linkages in cellulose, lichenin and cereal beta-D-glucans.. It functions in the pathway glycan metabolism; cellulose degradation. Functionally, this enzyme catalyzes the endohydrolysis of 1,4-beta-glucosidic linkages in cellulose, lichenin and cereal beta-D-glucans. Principally active against barley beta-glucan. The chain is Endoglucanase 1 (celI) from Acetivibrio thermocellus (strain ATCC 27405 / DSM 1237 / JCM 9322 / NBRC 103400 / NCIMB 10682 / NRRL B-4536 / VPI 7372) (Clostridium thermocellum).